We begin with the raw amino-acid sequence, 254 residues long: Thiazole synthase (254 aa).

Catalysis depends on lysine 95, which acts as the Schiff-base intermediate with DXP. Residues glycine 156, 182–183 (AG), and 204–205 (NT) contribute to the 1-deoxy-D-xylulose 5-phosphate site.

This sequence belongs to the ThiG family. As to quaternary structure, homotetramer. Forms heterodimers with either ThiH or ThiS.

The protein localises to the cytoplasm. The enzyme catalyses [ThiS sulfur-carrier protein]-C-terminal-Gly-aminoethanethioate + 2-iminoacetate + 1-deoxy-D-xylulose 5-phosphate = [ThiS sulfur-carrier protein]-C-terminal Gly-Gly + 2-[(2R,5Z)-2-carboxy-4-methylthiazol-5(2H)-ylidene]ethyl phosphate + 2 H2O + H(+). It functions in the pathway cofactor biosynthesis; thiamine diphosphate biosynthesis. Functionally, catalyzes the rearrangement of 1-deoxy-D-xylulose 5-phosphate (DXP) to produce the thiazole phosphate moiety of thiamine. Sulfur is provided by the thiocarboxylate moiety of the carrier protein ThiS. In vitro, sulfur can be provided by H(2)S. The chain is Thiazole synthase from Shewanella putrefaciens (strain CN-32 / ATCC BAA-453).